Here is a 45-residue protein sequence, read N- to C-terminus: uncharacterized protein (45 aa).

A helical membrane pass occupies residues 5–25; sequence IFFIFALSGILAACTVGGGVS.

Its subcellular location is the membrane. This is an uncharacterized protein from Haemophilus influenzae (strain ATCC 51907 / DSM 11121 / KW20 / Rd).